Consider the following 443-residue polypeptide: Thymidine phosphorylase (443 aa).

This sequence belongs to the thymidine/pyrimidine-nucleoside phosphorylase family. As to quaternary structure, homodimer.

The catalysed reaction is thymidine + phosphate = 2-deoxy-alpha-D-ribose 1-phosphate + thymine. The protein operates within pyrimidine metabolism; dTMP biosynthesis via salvage pathway; dTMP from thymine: step 1/2. Its function is as follows. The enzymes which catalyze the reversible phosphorolysis of pyrimidine nucleosides are involved in the degradation of these compounds and in their utilization as carbon and energy sources, or in the rescue of pyrimidine bases for nucleotide synthesis. This chain is Thymidine phosphorylase, found in Aeromonas hydrophila subsp. hydrophila (strain ATCC 7966 / DSM 30187 / BCRC 13018 / CCUG 14551 / JCM 1027 / KCTC 2358 / NCIMB 9240 / NCTC 8049).